Consider the following 426-residue polypeptide: 3-phosphoshikimate 1-carboxyvinyltransferase (426 aa).

3-phosphoshikimate contacts are provided by Lys20, Ser21, and Arg25. Residue Lys20 coordinates phosphoenolpyruvate. Positions 92 and 120 each coordinate phosphoenolpyruvate. Positions 166, 168, 312, and 339 each coordinate 3-phosphoshikimate. Gln168 contacts phosphoenolpyruvate. Asp312 functions as the Proton acceptor in the catalytic mechanism. 2 residues coordinate phosphoenolpyruvate: Arg343 and Arg385.

This sequence belongs to the EPSP synthase family. Monomer.

The protein resides in the cytoplasm. It carries out the reaction 3-phosphoshikimate + phosphoenolpyruvate = 5-O-(1-carboxyvinyl)-3-phosphoshikimate + phosphate. The protein operates within metabolic intermediate biosynthesis; chorismate biosynthesis; chorismate from D-erythrose 4-phosphate and phosphoenolpyruvate: step 6/7. Functionally, catalyzes the transfer of the enolpyruvyl moiety of phosphoenolpyruvate (PEP) to the 5-hydroxyl of shikimate-3-phosphate (S3P) to produce enolpyruvyl shikimate-3-phosphate and inorganic phosphate. The polypeptide is 3-phosphoshikimate 1-carboxyvinyltransferase (Enterococcus faecalis (strain ATCC 700802 / V583)).